The following is a 180-amino-acid chain: Small ribosomal subunit protein bS18 (180 aa).

Disordered stretches follow at residues 1-26 (MKNK…AHKV) and 53-82 (YSDK…DKES).

Belongs to the bacterial ribosomal protein bS18 family. Part of the 30S ribosomal subunit. Forms a tight heterodimer with protein bS6.

Binds as a heterodimer with protein bS6 to the central domain of the 16S rRNA, where it helps stabilize the platform of the 30S subunit. The protein is Small ribosomal subunit protein bS18 of Karelsulcia muelleri (strain GWSS) (Sulcia muelleri).